The following is a 421-amino-acid chain: ATP-dependent RNA helicase RhlB (421 aa).

The short motif at 9 to 37 (QKFSDFALHPKVVEVLEKKGFHNCTPIQA) is the Q motif element. In terms of domain architecture, Helicase ATP-binding spans 40–219 (LPLTLAGRDV…FEQMNNAEYI (180 aa)). An ATP-binding site is contributed by 53-60 (AQTGTGKT). Residues 165–168 (DEAD) carry the DEAD box motif. The Helicase C-terminal domain maps to 245–390 (RLLQTLIEEE…VSKYNPDALM (146 aa)). Residues 392-421 (DLPKPLRLTRPRTGNGPRRTGAPRNRRRSG) form a disordered region. Positions 402 to 414 (PRTGNGPRRTGAP) are enriched in low complexity.

Belongs to the DEAD box helicase family. RhlB subfamily. As to quaternary structure, component of the RNA degradosome, which is a multiprotein complex involved in RNA processing and mRNA degradation.

The protein localises to the cytoplasm. The catalysed reaction is ATP + H2O = ADP + phosphate + H(+). In terms of biological role, DEAD-box RNA helicase involved in RNA degradation. Has RNA-dependent ATPase activity and unwinds double-stranded RNA. The polypeptide is ATP-dependent RNA helicase RhlB (Shigella boydii serotype 18 (strain CDC 3083-94 / BS512)).